The chain runs to 305 residues: Carbonic anhydrase 4 (305 aa).

The signal sequence occupies residues 1–17 (MQLLLALLALAYVAPST). The region spanning 20–278 (SGWCYEIQTK…LGKRQVFKSH (259 aa)) is the Alpha-carbonic anhydrase domain. 2 cysteine pairs are disulfide-bonded: Cys23/Cys35 and Cys45/Cys222. His87 serves as the catalytic Proton donor/acceptor. Residues His114 and His116 each contribute to the Zn(2+) site. Asn123 is a glycosylation site (N-linked (GlcNAc...) asparagine). His139 is a binding site for Zn(2+). A glycan (N-linked (GlcNAc...) asparagine) is linked at Asn214. 218-219 (TT) is a binding site for substrate. Ser277 carries the GPI-anchor amidated serine lipid modification. Positions 278–305 (HAPGQLLSLPLPTLLVPTLTCLVANFLQ) are cleaved as a propeptide — removed in mature form.

Belongs to the alpha-carbonic anhydrase family. Interacts with SLC4A4. It depends on Zn(2+) as a cofactor.

The protein resides in the cell membrane. The catalysed reaction is hydrogencarbonate + H(+) = CO2 + H2O. Inhibited by acetazolamide. Functionally, catalyzes the reversible hydration of carbon dioxide into bicarbonate and protons and thus is essential to maintaining intracellular and extracellular pH. May stimulate the sodium/bicarbonate transporter activity of SLC4A4 that acts in pH homeostasis. It is essential for acid overload removal from the retina and retina epithelium, and acid release in the choriocapillaris in the choroid. The polypeptide is Carbonic anhydrase 4 (Ca4) (Mus musculus (Mouse)).